The sequence spans 75 residues: MIVRVCMGSSCHLKGSYEVVRRFQELQKKYNFKLYGSLCFGNCSQGVCVEIDGRLFSRVTPENAEEILKKVLQNG.

[2Fe-2S] cluster contacts are provided by Cys6, Cys11, Cys39, and Cys43.

[2Fe-2S] cluster serves as cofactor.

Its function is as follows. Might be part of a multi-protein complex, possibly involved in metal cluster assembly. This chain is Protein TM_1420, found in Thermotoga maritima (strain ATCC 43589 / DSM 3109 / JCM 10099 / NBRC 100826 / MSB8).